A 166-amino-acid chain; its full sequence is Phosphopantetheine adenylyltransferase (166 aa).

S9 lines the substrate pocket. ATP-binding positions include S9–F10 and H17. Residues K41, L74, and K88 each contribute to the substrate site. ATP is bound by residues G89–R91, E99, and Y123–T129.

It belongs to the bacterial CoaD family. As to quaternary structure, homohexamer. Requires Mg(2+) as cofactor.

The protein localises to the cytoplasm. The catalysed reaction is (R)-4'-phosphopantetheine + ATP + H(+) = 3'-dephospho-CoA + diphosphate. Its pathway is cofactor biosynthesis; coenzyme A biosynthesis; CoA from (R)-pantothenate: step 4/5. Reversibly transfers an adenylyl group from ATP to 4'-phosphopantetheine, yielding dephospho-CoA (dPCoA) and pyrophosphate. This is Phosphopantetheine adenylyltransferase from Pseudarthrobacter chlorophenolicus (strain ATCC 700700 / DSM 12829 / CIP 107037 / JCM 12360 / KCTC 9906 / NCIMB 13794 / A6) (Arthrobacter chlorophenolicus).